Here is a 150-residue protein sequence, read N- to C-terminus: S-protein homolog 24 (150 aa).

Asparagine 122 carries N-linked (GlcNAc...) asparagine glycosylation.

Belongs to the plant self-incompatibility (S1) protein family.

The protein resides in the secreted. This chain is S-protein homolog 24, found in Arabidopsis thaliana (Mouse-ear cress).